A 256-amino-acid polypeptide reads, in one-letter code: MSLLQDIVVIITGSASGIGLATATAALSQGARILGVDVSSAPVSLNEHPNYKFMQGDLTHETTPRQVVETCIKEFGGRIDGLLNIAGIMDQNSSVDSLSDYMWERCIAVNLTAPVKLMREVIPIMRQQQSGSIVNVGSKAATSGASSGVAYTASKHGLMGATKNVAWRYKQEGIRCNAVCPGGVPTGIVQASDPSTWDKDALGTMSLIHQAHAADRQKGLGVEAEDIADCLLFLISSQSKRINGAIIPIDNAWSVI.

NADP(+) contacts are provided by Ile-11, Asp-57, Arg-119, Tyr-151, Lys-155, and Val-184. Residue Tyr-151 is the Proton acceptor of the active site. Lys-155 serves as the catalytic Lowers pKa of active site Tyr.

It belongs to the short-chain dehydrogenases/reductases (SDR) family.

It functions in the pathway secondary metabolite biosynthesis; terpenoid biosynthesis. Its function is as follows. Short chain dehydrogenase; part of the gene cluster that mediates the biosynthesis of andrastins, meroterpenoid compounds that exhibit inhibitory activity against ras farnesyltransferase, suggesting that they could be promising leads for antitumor agents. The first step of the pathway is the synthesis of 3,5-dimethylorsellinic acid (DMOA) by the polyketide synthase adrD via condensation of one acetyl-CoA starter unit with 3 malonyl-CoA units and 2 methylations. DMAO is then converted to farnesyl-DMAO by the prenyltransferase adrG. The methyltransferase adrK catalyzes the methylation of the carboxyl group of farnesyl-DMAO to farnesyl-DMAO methyl ester which is further converted to epoxyfarnesyl-DMAO methyl ester by the FAD-dependent monooxygenase adrH. The terpene cyclase adrI then catalyzes the carbon skeletal rearrangement to generate the andrastin E, the first compound in the pathway having the andrastin scaffold, with the tetracyclic ring system. The post-cyclization tailoring enzymes adrF, adrE, adrJ, and adrA, are involved in the conversion of andrastin E into andrastin A. The short chain dehydrogenase adrF is responsible for the oxidation of the C-3 a hydroxyl group of andrastin E to yield the corresponding ketone, andrastin D. The ketoreductase adrE stereoselectively reduces the carbonyl moiety to reverse the stereochemistry of the C-3 position to yield andrastin F. The acetyltransferase adrJ is the acetyltransferase that attaches the acetyl group to the C-3 hydroxyl group of andrastin F to yield andrastin C. Finally, the cytochrome P450 monooxygenase adrA catalyzes two sequential oxidation reactions of the C-23 methyl group, to generate the corresponding alcohol andrastin B, and aldehyde andrastin A. The sequence is that of Short chain dehydrogenase adrF from Penicillium roqueforti.